The chain runs to 263 residues: Phosphatidylserine decarboxylase proenzyme (263 aa).

Catalysis depends on charge relay system; for autoendoproteolytic cleavage activity residues Asp90, His146, and Ser230. Ser230 acts as the Schiff-base intermediate with substrate; via pyruvic acid; for decarboxylase activity in catalysis. Ser230 is subject to Pyruvic acid (Ser); by autocatalysis.

This sequence belongs to the phosphatidylserine decarboxylase family. PSD-B subfamily. Prokaryotic type I sub-subfamily. As to quaternary structure, heterodimer of a large membrane-associated beta subunit and a small pyruvoyl-containing alpha subunit. The cofactor is pyruvate. Is synthesized initially as an inactive proenzyme. Formation of the active enzyme involves a self-maturation process in which the active site pyruvoyl group is generated from an internal serine residue via an autocatalytic post-translational modification. Two non-identical subunits are generated from the proenzyme in this reaction, and the pyruvate is formed at the N-terminus of the alpha chain, which is derived from the carboxyl end of the proenzyme. The autoendoproteolytic cleavage occurs by a canonical serine protease mechanism, in which the side chain hydroxyl group of the serine supplies its oxygen atom to form the C-terminus of the beta chain, while the remainder of the serine residue undergoes an oxidative deamination to produce ammonia and the pyruvoyl prosthetic group on the alpha chain. During this reaction, the Ser that is part of the protease active site of the proenzyme becomes the pyruvoyl prosthetic group, which constitutes an essential element of the active site of the mature decarboxylase.

It is found in the cell membrane. The enzyme catalyses a 1,2-diacyl-sn-glycero-3-phospho-L-serine + H(+) = a 1,2-diacyl-sn-glycero-3-phosphoethanolamine + CO2. The protein operates within phospholipid metabolism; phosphatidylethanolamine biosynthesis; phosphatidylethanolamine from CDP-diacylglycerol: step 2/2. In terms of biological role, catalyzes the formation of phosphatidylethanolamine (PtdEtn) from phosphatidylserine (PtdSer). The chain is Phosphatidylserine decarboxylase proenzyme from Bacillus subtilis (strain 168).